We begin with the raw amino-acid sequence, 122 residues long: Large ribosomal subunit protein uL18 (122 aa).

A compositionally biased stretch (basic residues) spans 1–21; that stretch reads MSKLSRKQQTQKRHRRLRRHI. The interval 1–25 is disordered; that stretch reads MSKLSRKQQTQKRHRRLRRHITGTS.

Belongs to the universal ribosomal protein uL18 family. In terms of assembly, part of the 50S ribosomal subunit; part of the 5S rRNA/L5/L18/L25 subcomplex. Contacts the 5S and 23S rRNAs.

This is one of the proteins that bind and probably mediate the attachment of the 5S RNA into the large ribosomal subunit, where it forms part of the central protuberance. This Synechococcus sp. (strain CC9902) protein is Large ribosomal subunit protein uL18.